The sequence spans 872 residues: MSKQNNRIIPTNRDKKICRKCGYHVCSDHYVANLNKHHEIIKNHNDKINRVNMNDIINIKLLFHILLPRDSFNKDKVISRTHDIVCSLNDDFNNYSSNTNTMNNSKYKNIIKQIFGANTIKQGIYLSSDYQKIIPEKSSNIVFELGEIYYYPVKHKLNLSKYDDISDVESQRHEIEQYVRSSEAGAYEPKKFVNIWIIDMIDTSILGFSNFPWEVVNSCHGIIANRRCFFPEEYGESNYSSFKTFTHHMGHHLGLLHVYNPNHCQSKSCDSSGGSKSIVLDFIIDPLDKINNKKLHIDKEYNPYFTNFMDFTCDKYVSNFTVRQIQEMRFMINKFKPKLNSLLNESQCPIPKYNPETDTISATINFNQRFSNREGSAVPSYEKADNPRMSASQGMINPEIFMGIADPQQPFLKPTVVPTNKNINDLIPNLCGTTLPTRKSGNTQDQIIENIQNVLPSSYMNSEQPKDAYADFKKKYNIIYSEDSYIINHPHNPYLLQQHHQDISAMQQQILEEKNQLRRATIDVPVCGNPYNAGQTVGHYVPPINPEEIDRFNAKRQFAESFNPEMFRPNDPLMYQSPQVDPSCCQKPMDPRLYRPAVPSDPRMGQYMTDPRLFQNGNQTQYQSNPQSNPQFNHQAYSQPNPQAYPQSNPQMYPQQTTFPPRYDPRMNNPYASRATSNGLSPNNVVQQYQSYYDNPSNQQSNQQSNQQSNQQPNQQPNQQPNQQPNQQPNQQSVQQCNQVNQEALNDLRSRNIKASPTVSPGDLINKMNRVNEQLQNIKSSLQQDPDTSTTTRVNTAVGQRSFGVPRVSNDQSKPKFNKFGQPITNSPFVSGNVASTAMSGKITKENISVNPRDASKAPKSRFQRTKPPQAV.

Positions 496–524 (LQQHHQDISAMQQQILEEKNQLRRATIDV) form a coiled coil. 2 disordered regions span residues 595–736 (RPAV…SVQQ) and 844–872 (TKEN…PQAV). 2 stretches are compositionally biased toward polar residues: residues 615-659 (QNGN…QTTF) and 670-686 (PYAS…NNVV). A compositionally biased stretch (low complexity) spans 687–736 (QQYQSYYDNPSNQQSNQQSNQQSNQQPNQQPNQQPNQQPNQQPNQQSVQQ).

Its subcellular location is the virion. This is an uncharacterized protein from Acanthamoeba polyphaga mimivirus (APMV).